The following is a 338-amino-acid chain: Glycerol-3-phosphate dehydrogenase [NAD(P)+] (338 aa).

Positions 14, 15, 35, and 109 each coordinate NADPH. 3 residues coordinate sn-glycerol 3-phosphate: lysine 109, glycine 138, and threonine 140. Alanine 142 provides a ligand contact to NADPH. Residues lysine 194, aspartate 247, serine 257, arginine 258, and asparagine 259 each coordinate sn-glycerol 3-phosphate. Lysine 194 acts as the Proton acceptor in catalysis. Arginine 258 lines the NADPH pocket. Residues valine 282 and glutamate 284 each coordinate NADPH.

The protein belongs to the NAD-dependent glycerol-3-phosphate dehydrogenase family.

The protein localises to the cytoplasm. The catalysed reaction is sn-glycerol 3-phosphate + NAD(+) = dihydroxyacetone phosphate + NADH + H(+). It carries out the reaction sn-glycerol 3-phosphate + NADP(+) = dihydroxyacetone phosphate + NADPH + H(+). The protein operates within membrane lipid metabolism; glycerophospholipid metabolism. Functionally, catalyzes the reduction of the glycolytic intermediate dihydroxyacetone phosphate (DHAP) to sn-glycerol 3-phosphate (G3P), the key precursor for phospholipid synthesis. The chain is Glycerol-3-phosphate dehydrogenase [NAD(P)+] from Shewanella oneidensis (strain ATCC 700550 / JCM 31522 / CIP 106686 / LMG 19005 / NCIMB 14063 / MR-1).